Here is a 465-residue protein sequence, read N- to C-terminus: Hexokinase type 1 (465 aa).

Residues 8–447 form the Hexokinase domain; it reads EEDFPEVYKV…CGVGAAIMAG (440 aa). The hexokinase small subdomain stretch occupies residues 65–197; that stretch reads TGRERGQFLA…EISVDVMGII (133 aa). Lysine 88 provides a ligand contact to ATP. The glucose-binding stretch occupies residues 139–165; sequence PLGIAFAFTLKKLALDVGILVSWTKEF. A hexokinase large subdomain region spans residues 198-436; it reads NVGAGSLLAL…YNFEFVITQD (239 aa).

The protein belongs to the hexokinase family.

The enzyme catalyses a D-hexose + ATP = a D-hexose 6-phosphate + ADP + H(+). It catalyses the reaction D-mannose + ATP = D-mannose 6-phosphate + ADP + H(+). It carries out the reaction D-fructose + ATP = D-fructose 6-phosphate + ADP + H(+). The catalysed reaction is D-glucose + ATP = D-glucose 6-phosphate + ADP + H(+). Its pathway is carbohydrate metabolism; hexose metabolism. The protein operates within carbohydrate degradation; glycolysis; D-glyceraldehyde 3-phosphate and glycerone phosphate from D-glucose: step 1/4. Functionally, catalyzes the phosphorylation of various hexoses to hexose 6-phosphate. The sequence is that of Hexokinase type 1 (Hex-t1) from Drosophila melanogaster (Fruit fly).